Consider the following 467-residue polypeptide: Glutamyl-tRNA(Gln) amidotransferase subunit A (467 aa).

Active-site charge relay system residues include K57 and S132. S156 (acyl-ester intermediate) is an active-site residue.

Belongs to the amidase family. GatA subfamily. As to quaternary structure, heterotrimer of A, B and C subunits.

The catalysed reaction is L-glutamyl-tRNA(Gln) + L-glutamine + ATP + H2O = L-glutaminyl-tRNA(Gln) + L-glutamate + ADP + phosphate + H(+). Functionally, allows the formation of correctly charged Gln-tRNA(Gln) through the transamidation of misacylated Glu-tRNA(Gln) in organisms which lack glutaminyl-tRNA synthetase. The reaction takes place in the presence of glutamine and ATP through an activated gamma-phospho-Glu-tRNA(Gln). The polypeptide is Glutamyl-tRNA(Gln) amidotransferase subunit A (Pseudothermotoga lettingae (strain ATCC BAA-301 / DSM 14385 / NBRC 107922 / TMO) (Thermotoga lettingae)).